We begin with the raw amino-acid sequence, 400 residues long: Phosphoglycerate kinase (400 aa).

Substrate contacts are provided by residues 21–23 (DFN), Arg36, 59–62 (HCSR), Arg118, and Arg151. Residues Lys201, Glu323, and 353–356 (GGDT) contribute to the ATP site.

The protein belongs to the phosphoglycerate kinase family. In terms of assembly, monomer.

The protein localises to the cytoplasm. The enzyme catalyses (2R)-3-phosphoglycerate + ATP = (2R)-3-phospho-glyceroyl phosphate + ADP. It participates in carbohydrate degradation; glycolysis; pyruvate from D-glyceraldehyde 3-phosphate: step 2/5. The sequence is that of Phosphoglycerate kinase from Bartonella bacilliformis (strain ATCC 35685 / KC583 / Herrer 020/F12,63).